Here is an 83-residue protein sequence, read N- to C-terminus: Small ribosomal subunit protein uS17 (83 aa).

Belongs to the universal ribosomal protein uS17 family. In terms of assembly, part of the 30S ribosomal subunit.

One of the primary rRNA binding proteins, it binds specifically to the 5'-end of 16S ribosomal RNA. In Aliarcobacter butzleri (strain RM4018) (Arcobacter butzleri), this protein is Small ribosomal subunit protein uS17.